The sequence spans 116 residues: Thioredoxin (116 aa).

The 112-residue stretch at 2-113 (TDSEKSATIK…LLRELSDVVP (112 aa)) folds into the Thioredoxin domain. A disulfide bridge links Cys37 with Cys40.

The protein belongs to the thioredoxin family.

Functionally, participates in various redox reactions through the reversible oxidation of its active center dithiol to a disulfide and catalyzes dithiol-disulfide exchange reactions. This is Thioredoxin (trxA) from Mycobacterium bovis (strain ATCC BAA-935 / AF2122/97).